The chain runs to 910 residues: Leucine--tRNA ligase (910 aa).

A 'HIGH' region motif is present at residues 42-52; sequence PYPSGKLHMGH. A 'KMSKS' region motif is present at residues 658–662; that stretch reads TMSKS. Position 661 (Lys661) interacts with ATP.

This sequence belongs to the class-I aminoacyl-tRNA synthetase family.

Its subcellular location is the cytoplasm. It carries out the reaction tRNA(Leu) + L-leucine + ATP = L-leucyl-tRNA(Leu) + AMP + diphosphate. The polypeptide is Leucine--tRNA ligase (Acidovorax sp. (strain JS42)).